Here is a 425-residue protein sequence, read N- to C-terminus: Potassium/proton antiporter CemA (425 aa).

The chain crosses the membrane as a helical span at residues 89-109 (LFLTTVKCLFILLFVPLGINF). Positions 159 to 278 (LSENQIFFGL…KTDFASVFRT (120 aa)) are insert. The interval 173–192 (STFPSSEKSQKSEHFSNQDE) is disordered. Basic and acidic residues predominate over residues 180-192 (KSQKSEHFSNQDE). The next 3 helical transmembrane spans lie at 300-320 (IEAI…CYLL), 350-370 (ILFI…ELFF), and 386-406 (IFLL…YLIF).

The protein belongs to the CemA family.

The protein localises to the plastid. It localises to the chloroplast inner membrane. It catalyses the reaction K(+)(in) + H(+)(out) = K(+)(out) + H(+)(in). Contributes to K(+)/H(+) antiport activity by supporting proton efflux to control proton extrusion and homeostasis in chloroplasts in a light-dependent manner to modulate photosynthesis. Prevents excessive induction of non-photochemical quenching (NPQ) under continuous-light conditions. Indirectly promotes efficient inorganic carbon uptake into chloroplasts. This is Potassium/proton antiporter CemA from Tetradesmus obliquus (Green alga).